The following is a 764-amino-acid chain: Thyrotropin receptor (764 aa).

The signal sequence occupies residues 1–21 (MRPGSLLLLVLLLALSRSLRG). The Extracellular portion of the chain corresponds to 22 to 413 (KECASPPCEC…EFNPCEDIMG (392 aa)). An intrachain disulfide couples Cys31 to Cys41. N-linked (GlcNAc...) asparagine glycosylation is found at Asn77 and Asn99. 7 LRR repeats span residues 100 to 124 (LSKMTHIEIRNTRSLTYIDPDALTE), 125 to 150 (LPLLKFLGIFNTGLRIFPDLTKIYST), 151 to 174 (DIFFILEITDNPYMTSVPENAFQG), 176 to 199 (CNETLTLKLYNNGFTSVQGHAFNG), 200 to 223 (TKLDAVYLNKNKYLTAIDNDAFGG), 225 to 248 (YSGPTLLDVSSTSVTALPSKGLEH), and 264 to 288 (PLSLSFLHLTRADLSYPSHCCAFKN). Residues Asn177 and Asn198 are each glycosylated (N-linked (GlcNAc...) asparagine). N-linked (GlcNAc...) asparagine glycosylation occurs at Asn302. At Tyr385 the chain carries Sulfotyrosine. The chain crosses the membrane as a helical span at residues 414-441 (YRFLRIVVWFVSLLALLGNIFVLLILLT). Over 442–450 (SHYKLTVPR) the chain is Cytoplasmic. The chain crosses the membrane as a helical span at residues 451–473 (FLMCNLAFADFCMGVYLLLIASV). The Extracellular segment spans residues 474–494 (DLYTHSEYYNHAIDWQTGPGC). A disulfide bond links Cys494 and Cys569. Residues 495-517 (NTAGFFTVFASELSVYTLTVITL) traverse the membrane as a helical segment. The Cytoplasmic segment spans residues 518-537 (ERWYAITFAMRLDRKIRLRH). A helical transmembrane segment spans residues 538-560 (AYTIMAGGWVSCFLLALLPMVGI). Residues 561–580 (SSYAKVSICLPMDTDTPLAL) are Extracellular-facing. The chain crosses the membrane as a helical span at residues 581–602 (AYIVLVLLLNVVAFVVVCSCYV). At 603–625 (KIYITVRNPQYNPRDKDTKIAKR) the chain is on the cytoplasmic side. The helical transmembrane segment at 626–649 (MAVLIFTDFMCMAPISFYALSALM) threads the bilayer. Over 650–660 (NKPLITVTNSK) the chain is Extracellular. A helical transmembrane segment spans residues 661–682 (ILLVLFYPLNSCANPFLYAIFT). Topologically, residues 683–764 (KAFQRDVFIL…ISEEYKQTAL (82 aa)) are cytoplasmic. A PDZ-binding motif is present at residues 762–764 (TAL).

This sequence belongs to the G-protein coupled receptor 1 family. FSH/LSH/TSH subfamily. In terms of assembly, interacts with heterodimer GPHA2:GPHB5; this interaction stimulates cAMP production. Interacts (via the PDZ-binding motif) with SCRIB; regulates TSHR trafficking and function. In terms of processing, glycosylated. Post-translationally, sulfated. Sulfation on Tyr-385 plays a role in thyrotropin receptor binding and activation.

The protein localises to the cell membrane. Its subcellular location is the basolateral cell membrane. Its function is as follows. Receptor for the thyroid-stimulating hormone (TSH) or thyrotropin. Also acts as a receptor for the heterodimeric glycoprotein hormone (GPHA2:GPHB5) or thyrostimulin. The activity of this receptor is mediated by G proteins which activate adenylate cyclase. Plays a central role in controlling thyroid cell metabolism. This chain is Thyrotropin receptor (Tshr), found in Mus musculus (Mouse).